The following is a 193-amino-acid chain: Transmembrane protein 066L (193 aa).

Helical transmembrane passes span 14 to 34 (VLFA…GLVW) and 48 to 68 (LVVE…LVVV).

This sequence belongs to the IIV-6 357R family.

It localises to the membrane. This Invertebrate iridescent virus 3 (IIV-3) protein is Transmembrane protein 066L.